A 341-amino-acid chain; its full sequence is Myb-related transcription factor, partner of profilin (341 aa).

In terms of domain architecture, Myb-like spans 8–80 (VTRLRKPRFS…EVQKRWNDFK (73 aa)). 3 disordered regions span residues 84–103 (KEKL…EEAM), 180–210 (LPHL…PSGV), and 309–341 (AEPP…WKNL). Pro residues predominate over residues 184–200 (TPSPDPSECPSPPPPGS). Over residues 321–341 (NKRKRFGYLSQRKRRGRWKNL) the composition is skewed to basic residues.

It localises to the nucleus. In terms of biological role, transcriptional repressor; DNA-binding protein that specifically recognizes the core sequence 5'-YAAC[GT]G-3'. The polypeptide is Myb-related transcription factor, partner of profilin (mypop) (Xenopus laevis (African clawed frog)).